A 1064-amino-acid polypeptide reads, in one-letter code: Adenylate cyclase type 4 (1064 aa).

At 1-28 the chain is on the cytoplasmic side; the sequence is MARLFSPRPPPSEDLFYETYYSLSQQYP. A run of 6 helical transmembrane segments spans residues 29 to 50, 61 to 80, 94 to 117, 120 to 138, 141 to 162, and 170 to 190; these read LLIL…VAWA, FLTT…GLAS, GLIW…VSAW, VSFF…PLGM, AAAA…YLGW, and LLPQ…VGAY. Over 191–582 the chain is Cytoplasmic; the sequence is HKALMERALR…YRLSALPAFK (392 aa). Mg(2+)-binding residues include D278, I279, and D322. ATP-binding positions include 278 to 283, 320 to 322, and R366; these read DIVGFT and LGD. Residues 498-523 form a disordered region; it reads DSPASTSTPLPEKAFSPQWSLDRSRT. Position 517 is a phosphoserine (S517). The residue at position 533 (T533) is a Phosphothreonine. Helical transmembrane passes span 583–604, 608–630, and 661–684; these read YYAA…LVTT, ALAT…CFSE, and VALG…FLPV. At 685–707 the chain is on the extracellular side; it reads SSDCPFLAPNVSSVAFNTSWELP. N-linked (GlcNAc...) asparagine glycosylation is found at N694 and N701. The next 3 helical transmembrane spans lie at 708–733, 741–761, and 788–804; these read ASLP…SLFL, LLLL…SHAW, and MGAI…LVLA. Residues 805-1064 lie on the Cytoplasmic side of the membrane; it reads RQNEYYCRLD…LTRTGSPSAS (260 aa). ATP-binding positions include K914, 994-996, 1001-1005, and K1041; these read DIW and NVASR.

This sequence belongs to the adenylyl cyclase class-4/guanylyl cyclase family. The cofactor is Mg(2+). Mn(2+) serves as cofactor. As to expression, widely distributed.

The protein resides in the cell membrane. Its subcellular location is the cytoplasm. The catalysed reaction is ATP = 3',5'-cyclic AMP + diphosphate. Its activity is regulated as follows. Activated by forskolin. Insensitive to calcium/calmodulin. Stimulated by GNAS and by the G-protein beta and gamma subunit complex. Its function is as follows. Catalyzes the formation of the signaling molecule cAMP in response to G-protein signaling. The chain is Adenylate cyclase type 4 (Adcy4) from Rattus norvegicus (Rat).